Here is a 525-residue protein sequence, read N- to C-terminus: Mitoguardin (525 aa).

The chain crosses the membrane as a helical span at residues 26-45 (VVLFSLTAGVALMSVLSRFL). Over residues 47–67 (RRKPPRPPRRARKYTGRRNRN) the composition is skewed to basic residues. Disordered regions lie at residues 47–73 (RRKP…RSPN) and 210–239 (DEAE…GSDP). The segment covering 211 to 220 (EAEEEAGEAD) has biased composition (acidic residues).

It belongs to the mitoguardin family. As to quaternary structure, interacts with zuc.

The protein localises to the mitochondrion outer membrane. Regulator of mitochondrial fusion required to maintain neuronal homeostasis. The sequence is that of Mitoguardin from Drosophila melanogaster (Fruit fly).